Consider the following 92-residue polypeptide: UPF0250 protein XCC3453 (92 aa).

The protein belongs to the UPF0250 family.

In Xanthomonas campestris pv. campestris (strain ATCC 33913 / DSM 3586 / NCPPB 528 / LMG 568 / P 25), this protein is UPF0250 protein XCC3453.